The sequence spans 182 residues: Transcription termination/antitermination protein NusG (182 aa).

The KOW domain maps to 131–163 (VGEQVRIKSGPFANQVGEVQEIETDKFKLTVLV).

The protein belongs to the NusG family.

Participates in transcription elongation, termination and antitermination. In Staphylococcus aureus (strain NCTC 8325 / PS 47), this protein is Transcription termination/antitermination protein NusG.